Here is a 483-residue protein sequence, read N- to C-terminus: Glutamyl-tRNA(Gln) amidotransferase subunit A (483 aa).

Active-site charge relay system residues include Lys-76 and Ser-151. The Acyl-ester intermediate role is filled by Ser-175.

It belongs to the amidase family. GatA subfamily. As to quaternary structure, heterotrimer of A, B and C subunits.

It carries out the reaction L-glutamyl-tRNA(Gln) + L-glutamine + ATP + H2O = L-glutaminyl-tRNA(Gln) + L-glutamate + ADP + phosphate + H(+). In terms of biological role, allows the formation of correctly charged Gln-tRNA(Gln) through the transamidation of misacylated Glu-tRNA(Gln) in organisms which lack glutaminyl-tRNA synthetase. The reaction takes place in the presence of glutamine and ATP through an activated gamma-phospho-Glu-tRNA(Gln). This Ectopseudomonas mendocina (strain ymp) (Pseudomonas mendocina) protein is Glutamyl-tRNA(Gln) amidotransferase subunit A.